The sequence spans 140 residues: Transcription antitermination protein NusB (140 aa).

This sequence belongs to the NusB family.

Involved in transcription antitermination. Required for transcription of ribosomal RNA (rRNA) genes. Binds specifically to the boxA antiterminator sequence of the ribosomal RNA (rrn) operons. This chain is Transcription antitermination protein NusB, found in Streptococcus pneumoniae (strain 70585).